We begin with the raw amino-acid sequence, 39 residues long: Pro-opiomelanocortin (39 aa).

The residue at position 1 (Ser-1) is an N-acetylserine. Val-13 bears the Valine amide mark. Phosphoserine is present on Ser-31.

The protein belongs to the POMC family. In terms of tissue distribution, expressed in the pituitary gland.

The protein localises to the secreted. Its function is as follows. Precursor protein for pituitary hormones that regulate stress and environmental adaptation. In terms of biological role, stimulates the adrenal glands to release cortisol. Functionally, anorexigenic peptide. Increases the pigmentation of skin by increasing melanin production in melanocytes. This is Pro-opiomelanocortin (POMC) from Oryctolagus cuniculus (Rabbit).